A 195-amino-acid polypeptide reads, in one-letter code: Protein hunchback (195 aa).

Disordered stretches follow at residues 16–57 (SHHH…SHTN), 64–83 (LKQQQQQQQQHQHQQQQQPM), and 155–195 (LTPP…KYMA). Residues 17 to 29 (HHHHHHHAHHSHH) are compositionally biased toward basic residues. Low complexity-rich tracts occupy residues 33–44 (SNSNSNASSPHQ) and 66–81 (QQQQQQQQHQHQQQQQ). Positions 176-195 (EPEKEHDLMSNSSEDMKYMA) are enriched in basic and acidic residues.

The protein belongs to the hunchback C2H2-type zinc-finger protein family.

It localises to the nucleus. Functionally, gap class segmentation protein that controls development of head structures. The protein is Protein hunchback (hb) of Drosophila dasycnemia (Fruit fly).